Reading from the N-terminus, the 89-residue chain is MTIKLINIGFGNIISANRMISIVSPESAPIKRMIQDARDRGMLIDATYGRRTRAVVIMDSDHVILSAVQPETVAQRLSVKEEIIDEGQG.

It belongs to the RemA family.

The polypeptide is Putative regulatory protein BPUM_1466 (Bacillus pumilus (strain SAFR-032)).